We begin with the raw amino-acid sequence, 348 residues long: Rhodopsin (348 aa).

An N-acetylmethionine modification is found at M1. Residues 1-36 (MNGTEGPNFYVPFSNKTGVVRSPFEYPQYYLAEPWQ) are Extracellular-facing. 2 N-linked (GlcNAc...) asparagine glycosylation sites follow: N2 and N15. The chain crosses the membrane as a helical span at residues 37–61 (FSMLAAYMFLLIVLGFPINFLTLYV). Topologically, residues 62-73 (TVQHKNVRTPLN) are cytoplasmic. The helical transmembrane segment at 74 to 96 (YILLNLAVANHFMVFGGFTTTLY) threads the bilayer. The Extracellular portion of the chain corresponds to 97–110 (TSLHGYFVFGSTGC). An intrachain disulfide couples C110 to C187. A helical membrane pass occupies residues 111–133 (NLEGFFATLGGEIALWSLVVLAI). A 'Ionic lock' involved in activated form stabilization motif is present at residues 134–136 (ERY). The Cytoplasmic portion of the chain corresponds to 134 to 152 (ERYVVVCKPMSNFRFGENH). The helical transmembrane segment at 153–173 (AIMGVAFTWVMALACAAPPLV) threads the bilayer. Residues 174-202 (GWSRYIPEGMQCSCGIDYYTLKPEVNNES) are Extracellular-facing. E201 serves as a coordination point for Zn(2+). The helical transmembrane segment at 203–224 (FVIYMFVVHFTIPMTIIFFCYG) threads the bilayer. The Cytoplasmic segment spans residues 225-252 (QLVFTVKEAAAQQQESATTQKAEKEVTR). The helical transmembrane segment at 253–274 (MVIIMVIAFLICWVPYASVAFY) threads the bilayer. Residues 275 to 286 (IFTHQGSDFGPI) lie on the Extracellular side of the membrane. Q279 is a binding site for Zn(2+). A helical membrane pass occupies residues 287-308 (LMTLPAFFAKSSAIYNPVIYIM). K296 bears the N6-(retinylidene)lysine mark. At 309–348 (MNKQFRNCMLTTICCGKNPFGEEEGSTTASKTETSQVAPA) the chain is on the cytoplasmic side. Residues C322 and C323 are each lipidated (S-palmitoyl cysteine). The interaction with SAG stretch occupies residues 330-348 (EEEGSTTASKTETSQVAPA). S334 is modified (phosphoserine). 2 positions are modified to phosphothreonine: T335 and T336. The residue at position 338 (S338) is a Phosphoserine. Residues T340 and T342 each carry the phosphothreonine modification. S343 carries the post-translational modification Phosphoserine.

This sequence belongs to the G-protein coupled receptor 1 family. Opsin subfamily. Homodimer. May form a complex composed of RHO, GRK1 and RCVRN in a Ca(2+)-dependent manner; RCVRN prevents the interaction between GRK1 and RHO. Interacts with GRK1. Interacts (phosphorylated form) with SAG. Interacts with GNAT1. Interacts with GNAT3. SAG and G-proteins compete for a common binding site. Interacts with PRCD; the interaction promotes PRCD stability. Forms a complex with ASAP1 and ARF4. Forms a complex with ASAP1, RAB11A, Rabin8/RAB3IP, ARF4 and RAB11FIP3; the complex regulates Golgi-to-cilia rhodopsin/RHO transport in photoreceptors. Phosphorylated on some or all of the serine and threonine residues present in the C-terminal region. In terms of processing, contains one covalently linked retinal chromophore. Upon light absorption, the covalently bound 11-cis-retinal is converted to all-trans-retinal. After hydrolysis of the Schiff base and release of the covalently bound all-trans-retinal, active rhodopsin is regenerated by binding of a fresh molecule of 11-cis-retinal.

It localises to the membrane. The protein localises to the cell projection. It is found in the cilium. The protein resides in the photoreceptor outer segment. Its function is as follows. Photoreceptor required for image-forming vision at low light intensity. Required for photoreceptor cell viability after birth. Light-induced isomerization of 11-cis to all-trans retinal triggers a conformational change that activates signaling via G-proteins. Subsequent receptor phosphorylation mediates displacement of the bound G-protein alpha subunit by the arrestin SAG and terminates signaling. This chain is Rhodopsin (RHO), found in Loxodonta africana (African elephant).